Here is a 182-residue protein sequence, read N- to C-terminus: Adenine phosphoribosyltransferase (182 aa).

The protein belongs to the purine/pyrimidine phosphoribosyltransferase family. In terms of assembly, homodimer.

It is found in the cytoplasm. It carries out the reaction AMP + diphosphate = 5-phospho-alpha-D-ribose 1-diphosphate + adenine. The protein operates within purine metabolism; AMP biosynthesis via salvage pathway; AMP from adenine: step 1/1. Functionally, catalyzes a salvage reaction resulting in the formation of AMP, that is energically less costly than de novo synthesis. The protein is Adenine phosphoribosyltransferase of Pseudomonas fluorescens (strain SBW25).